The sequence spans 276 residues: Dermonecrotic toxin LdSicTox-alphaIB2 (276 aa).

Residue H5 is part of the active site. E25 and D27 together coordinate Mg(2+). H41 (nucleophile) is an active-site residue. Intrachain disulfides connect C45–C51 and C47–C190. D85 serves as a coordination point for Mg(2+). An N-linked (GlcNAc...) asparagine glycan is attached at N253.

The protein belongs to the arthropod phospholipase D family. Class II subfamily. Requires Mg(2+) as cofactor. As to expression, expressed by the venom gland.

Its subcellular location is the secreted. It catalyses the reaction an N-(acyl)-sphingosylphosphocholine = an N-(acyl)-sphingosyl-1,3-cyclic phosphate + choline. The enzyme catalyses an N-(acyl)-sphingosylphosphoethanolamine = an N-(acyl)-sphingosyl-1,3-cyclic phosphate + ethanolamine. The catalysed reaction is a 1-acyl-sn-glycero-3-phosphocholine = a 1-acyl-sn-glycero-2,3-cyclic phosphate + choline. It carries out the reaction a 1-acyl-sn-glycero-3-phosphoethanolamine = a 1-acyl-sn-glycero-2,3-cyclic phosphate + ethanolamine. Its function is as follows. Dermonecrotic toxins cleave the phosphodiester linkage between the phosphate and headgroup of certain phospholipids (sphingolipid and lysolipid substrates), forming an alcohol (often choline) and a cyclic phosphate. This toxin acts on sphingomyelin (SM). It may also act on ceramide phosphoethanolamine (CPE), lysophosphatidylcholine (LPC) and lysophosphatidylethanolamine (LPE), but not on lysophosphatidylserine (LPS), and lysophosphatidylglycerol (LPG). It acts by transphosphatidylation, releasing exclusively cyclic phosphate products as second products. Induces dermonecrosis, hemolysis, increased vascular permeability, edema, inflammatory response, and platelet aggregation. The chain is Dermonecrotic toxin LdSicTox-alphaIB2 from Loxosceles deserta (Desert recluse spider).